A 310-amino-acid chain; its full sequence is Vomeronasal type-1 receptor 3 (310 aa).

The Extracellular segment spans residues 1–5 (MASKD). A helical transmembrane segment spans residues 6 to 26 (FAIGMILSQIMVGFLGNFFLL). The Cytoplasmic segment spans residues 27–50 (YHYSFLHFTRGMLQSTDLTLKHLT). A helical transmembrane segment spans residues 51–71 (IANSLVILSKGIPQTMAAFGL). The Extracellular portion of the chain corresponds to 72-91 (KDSLSDIGCKFVFYVHRVGR). The helical transmembrane segment at 92 to 112 (AVCTGNACLLSVFQVITISSS) threads the bilayer. Topologically, residues 113–129 (EFRWAELKLHAHKYIRS) are cytoplasmic. The helical transmembrane segment at 130–150 (FILVLCWILNTLVNITVPLHV) threads the bilayer. Topologically, residues 151-186 (TGKWNSINSTKTNDYGYCSGGSRSRIPHSLHIVLLS) are extracellular. A glycan (N-linked (GlcNAc...) asparagine) is linked at Asn-158. The helical transmembrane segment at 187-207 (SLDVLCLGLMTLASGSMVFIL) threads the bilayer. Residues 208–235 (HRLKQQVQHIHGTNLSPRSSPESRVTQS) lie on the Cytoplasmic side of the membrane. The helical transmembrane segment at 236-258 (ILVLVSTLCYFTRSPPSLHMSLF) threads the bilayer. Topologically, residues 259–263 (PNPSW) are extracellular. A helical membrane pass occupies residues 264-284 (WPLNASALITACFPTVSPFVL). The Cytoplasmic portion of the chain corresponds to 285–310 (MSRHPRIPRLGSACCGRNPQFPKLVR).

The protein belongs to the G-protein coupled receptor 1 family.

Its subcellular location is the cell membrane. Its function is as follows. Putative pheromone receptor. The protein is Vomeronasal type-1 receptor 3 (VN1R3) of Pan troglodytes (Chimpanzee).